A 334-amino-acid chain; its full sequence is Leukocyte cell-derived chemotaxin 1 (334 aa).

The helical transmembrane segment at valine 46–tryptophan 66 threads the bilayer. The BRICHOS domain maps to glycine 105 to leucine 201. A disulfide bridge connects residues cysteine 132 and cysteine 193. The propeptide occupies arginine 211 to arginine 214. A disordered region spans residues glutamate 212 to glutamate 268. Residue asparagine 243 is glycosylated (N-linked (GlcNAc...) asparagine). Cystine bridges form between cysteine 282–cysteine 286, cysteine 283–cysteine 323, cysteine 293–cysteine 317, and cysteine 297–cysteine 313.

This sequence belongs to the chondromodulin-1 family. In terms of processing, after cleavage, the post-translationally modified ChM-I is secreted as a glycoprotein. Detected in cartilage, cardiac valves and valvular interstitial cells (at protein level). Expressed in eye.

The protein resides in the secreted. It localises to the extracellular space. Its subcellular location is the extracellular matrix. The protein localises to the endomembrane system. Its function is as follows. Bifunctional growth regulator that stimulates the growth of cultured chondrocytes in the presence of basic fibroblast growth factor (FGF) but inhibits the growth of cultured vascular endothelial cells. May contribute to the rapid growth of cartilage and vascular invasion prior to the replacement of cartilage by bone during endochondral bone development. Inhibits in vitro tube formation and mobilization of endothelial cells. Plays a role as antiangiogenic factor in cardiac valves to suppress neovascularization. The polypeptide is Leukocyte cell-derived chemotaxin 1 (Rattus norvegicus (Rat)).